Here is a 320-residue protein sequence, read N- to C-terminus: ATP-dependent 6-phosphofructokinase (320 aa).

G12 provides a ligand contact to ATP. ADP contacts are provided by residues 22-26 and 55-60; these read RGVVR and RYSVSD. ATP contacts are provided by residues 73–74 and 103–106; these read RF and GDGS. D104 provides a ligand contact to Mg(2+). 126-128 lines the substrate pocket; sequence TID. D128 serves as the catalytic Proton acceptor. R155 lines the ADP pocket. Residues R163 and 170–172 each bind substrate; that span reads MGR. Residues 186-188, K212, and 214-216 contribute to the ADP site; these read GCE and KKH. Residues E223, R244, and 250 to 253 contribute to the substrate site; that span reads HIQR.

It belongs to the phosphofructokinase type A (PFKA) family. ATP-dependent PFK group I subfamily. Prokaryotic clade 'B1' sub-subfamily. Homotetramer. It depends on Mg(2+) as a cofactor.

The protein resides in the cytoplasm. It catalyses the reaction beta-D-fructose 6-phosphate + ATP = beta-D-fructose 1,6-bisphosphate + ADP + H(+). The protein operates within carbohydrate degradation; glycolysis; D-glyceraldehyde 3-phosphate and glycerone phosphate from D-glucose: step 3/4. With respect to regulation, allosterically activated by ADP and other diphosphonucleosides, and allosterically inhibited by phosphoenolpyruvate. Catalyzes the phosphorylation of D-fructose 6-phosphate to fructose 1,6-bisphosphate by ATP, the first committing step of glycolysis. The polypeptide is ATP-dependent 6-phosphofructokinase (Buchnera aphidicola subsp. Baizongia pistaciae (strain Bp)).